Reading from the N-terminus, the 320-residue chain is ATP-dependent 6-phosphofructokinase (320 aa).

Gly12 serves as a coordination point for ATP. Residue 22–26 (RGVVR) coordinates ADP. Residues 73–74 (RF) and 103–106 (GDGS) each bind ATP. Asp104 lines the Mg(2+) pocket. Residue 126 to 128 (TID) participates in substrate binding. Asp128 acts as the Proton acceptor in catalysis. Arg155 serves as a coordination point for ADP. Substrate-binding positions include Arg163 and 170-172 (MGR). Residues 186 to 188 (GCE), Lys212, and 214 to 216 (KKH) each bind ADP. Substrate contacts are provided by residues Glu223, Arg244, and 250 to 253 (HIQR).

This sequence belongs to the phosphofructokinase type A (PFKA) family. ATP-dependent PFK group I subfamily. Prokaryotic clade 'B1' sub-subfamily. As to quaternary structure, homotetramer. Mg(2+) is required as a cofactor.

Its subcellular location is the cytoplasm. It catalyses the reaction beta-D-fructose 6-phosphate + ATP = beta-D-fructose 1,6-bisphosphate + ADP + H(+). The protein operates within carbohydrate degradation; glycolysis; D-glyceraldehyde 3-phosphate and glycerone phosphate from D-glucose: step 3/4. With respect to regulation, allosterically activated by ADP and other diphosphonucleosides, and allosterically inhibited by phosphoenolpyruvate. Its function is as follows. Catalyzes the phosphorylation of D-fructose 6-phosphate to fructose 1,6-bisphosphate by ATP, the first committing step of glycolysis. This is ATP-dependent 6-phosphofructokinase from Vibrio campbellii (strain ATCC BAA-1116).